A 217-amino-acid chain; its full sequence is Translation initiation factor IF-3 (217 aa).

The protein belongs to the IF-3 family. In terms of assembly, monomer.

The protein localises to the cytoplasm. IF-3 binds to the 30S ribosomal subunit and shifts the equilibrium between 70S ribosomes and their 50S and 30S subunits in favor of the free subunits, thus enhancing the availability of 30S subunits on which protein synthesis initiation begins. This is Translation initiation factor IF-3 from Synechococcus sp. (strain CC9902).